The primary structure comprises 142 residues: Large ribosomal subunit protein uL13 (142 aa).

It belongs to the universal ribosomal protein uL13 family. As to quaternary structure, part of the 50S ribosomal subunit.

This protein is one of the early assembly proteins of the 50S ribosomal subunit, although it is not seen to bind rRNA by itself. It is important during the early stages of 50S assembly. The sequence is that of Large ribosomal subunit protein uL13 from Lachnospira eligens (strain ATCC 27750 / DSM 3376 / VPI C15-48 / C15-B4) (Eubacterium eligens).